We begin with the raw amino-acid sequence, 430 residues long: MALLLSLSLLATTISAQQIGTPEIRPRLTTYHCTSANGCTEQNTSVVLDAATHPIHDASNPSVSCTTSNGLNPALCPDKQTCADNCVIDGITDYAAHGVETHGSRLTLTQYRNVNGALSSVSPRVYLVDESDPDEQEYRALSLLAQEFTFTVNVSALPCGMNGALYLSEMSPSGGRSALNPAGASYGTGYCDAQCYVNPWINGEGNINGYGACCNEMDIWEANSRSTGFTPHACLYEPEETEGRGVYECASEDECDSAGENDGICDKWGCGFNPYALGNTEYYGRGQGFEVDTKEPFTVVTQFLTDDGTSTGALTEIRRLYIQNGQVIENAVVSSGADSLTDSLCASTASWFDSYGGMEGMGRALGRGMVLAMSIWNDAGGYMQWLDGGDAGPCNATEGAPEFIEEHTPWTRVVFEDLKWGDIGSTFQAS.

The first 16 residues, 1–16 (MALLLSLSLLATTISA), serve as a signal peptide directing secretion. N-linked (GlcNAc...) asparagine glycosylation is found at N43 and N153. The active-site Nucleophile is E216. Residue E221 is the Proton donor of the active site. The N-linked (GlcNAc...) asparagine glycan is linked to N395.

This sequence belongs to the glycosyl hydrolase 7 (cellulase C) family.

It is found in the secreted. It carries out the reaction Endohydrolysis of (1-&gt;4)-beta-D-glucosidic linkages in cellulose, lichenin and cereal beta-D-glucans.. Has endoglucanase activity on substrates containing beta-1,4 glycosidic bonds, like in carboxymethylcellulose (CMC), hydroxyethylcellulose (HEC) and beta-glucan. Involved in the degradation of complex natural cellulosic substrates. The protein is Endo-beta-1,4-glucanase celB (celB) of Emericella nidulans (strain FGSC A4 / ATCC 38163 / CBS 112.46 / NRRL 194 / M139) (Aspergillus nidulans).